Consider the following 328-residue polypeptide: GTP 3',8-cyclase (328 aa).

The Radical SAM core domain occupies 1 to 229 (MNQVDYLRIS…ESQVRGAGPA (229 aa)). A GTP-binding site is contributed by R8. Positions 15 and 19 each coordinate [4Fe-4S] cluster. Y21 is a binding site for S-adenosyl-L-methionine. C22 lines the [4Fe-4S] cluster pocket. Position 60 (R60) interacts with GTP. Residue G64 participates in S-adenosyl-L-methionine binding. T91 is a binding site for GTP. S115 lines the S-adenosyl-L-methionine pocket. K155 provides a ligand contact to GTP. M189 contacts S-adenosyl-L-methionine. Residues C252 and C255 each coordinate [4Fe-4S] cluster. 257-259 (RMR) serves as a coordination point for GTP. Position 269 (C269) interacts with [4Fe-4S] cluster.

Belongs to the radical SAM superfamily. MoaA family. As to quaternary structure, monomer and homodimer. It depends on [4Fe-4S] cluster as a cofactor.

The enzyme catalyses GTP + AH2 + S-adenosyl-L-methionine = (8S)-3',8-cyclo-7,8-dihydroguanosine 5'-triphosphate + 5'-deoxyadenosine + L-methionine + A + H(+). It participates in cofactor biosynthesis; molybdopterin biosynthesis. Catalyzes the cyclization of GTP to (8S)-3',8-cyclo-7,8-dihydroguanosine 5'-triphosphate. The chain is GTP 3',8-cyclase from Nostoc punctiforme (strain ATCC 29133 / PCC 73102).